Consider the following 485-residue polypeptide: Podocalyxin (485 aa).

A signal peptide spans 1–24 (MRPTLALSALLLLQLLLLSTPSLS). Residues 22–267 (SLSQDNGNKT…STPSSTWTSG (246 aa)) form a disordered region. Over 25 to 386 (QDNGNKTDTS…PPEVNEDRFS (362 aa)) the chain is Extracellular. Polar residues predominate over residues 26–57 (DNGNKTDTSDITSIDQNQDKPATNQPSNATPK). N-linked (GlcNAc...) asparagine glycosylation is found at Asn29 and Asn82. Over residues 58–109 (SSVQPPTPTSISTSSPDPKATQSSNSSVTTTSDSTTDRTSSSTSTVPTTSNS) the composition is skewed to low complexity. Composition is skewed to polar residues over residues 110 to 128 (GQTV…TALP) and 135 to 149 (NASS…STKL). 3 N-linked (GlcNAc...) asparagine glycosylation sites follow: Asn135, Asn144, and Asn156. The segment covering 150-161 (PSTPTTNSTASP) has biased composition (low complexity). Polar residues-rich tracts occupy residues 163–176 (QPVS…TTVQ), 186–228 (DNTT…QPTG), and 235–253 (SVPT…TPVV). Asn187 carries an N-linked (GlcNAc...) asparagine glycan. The span at 254 to 267 (SQGPSTPSSTWTSG) shows a compositional bias: low complexity. An N-linked (GlcNAc...) asparagine glycan is attached at Asn287. Residues 387–407 (LPLIITIVCMASFLLLVAALY) traverse the membrane as a helical segment. Over 408-485 (GCCHQRISQR…DLDEEEDTHL (78 aa)) the chain is Cytoplasmic. Thr445 is modified (phosphothreonine). The residue at position 464 (Ser464) is a Phosphoserine. The residue at position 483 (Thr483) is a Phosphothreonine.

This sequence belongs to the podocalyxin family. As to quaternary structure, monomer; when associated with the membrane raft. Oligomer; when integrated in the apical membrane. Interacts with NHERF2. Interacts (via the C-terminal PDZ-binding motif DTHL) with NHERF1 (via the PDZ domains); the interaction take place early in the secretory pathway and is necessary for its apical membrane sorting. Found in a complex with EZR, PODXL and NHERF2. Associates with the actin cytoskeleton through complex formation with EZR and NHERF2. Interacts (via the C-terminal PDZ-binding motif DTHL) with NHERF1 (via the PDZ domains); interaction is not detected in glomerular epithelium cells. Interacts (via the C-terminal PDZ-binding motif DTHL) with NHERF2 (via the PDZ 1 domain); interaction is detected in glomerular epithelium cells. Interacts with EZR. N- and O-linked glycosylated. Sialoglycoprotein. In terms of tissue distribution, glomerular epithelium cell (podocyte) (at protein level).

The protein resides in the apical cell membrane. It is found in the cell projection. The protein localises to the microvillus. Its subcellular location is the membrane raft. It localises to the lamellipodium. The protein resides in the filopodium. It is found in the ruffle. The protein localises to the membrane. In terms of biological role, involved in the regulation of both adhesion and cell morphology and cancer progression. Functions as an anti-adhesive molecule that maintains an open filtration pathway between neighboring foot processes in the podocyte by charge repulsion. Acts as a pro-adhesive molecule, enhancing the adherence of cells to immobilized ligands, increasing the rate of migration and cell-cell contacts in an integrin-dependent manner. Induces the formation of apical actin-dependent microvilli. Involved in the formation of a preapical plasma membrane subdomain to set up initial epithelial polarization and the apical lumen formation during renal tubulogenesis. Plays a role in cancer development and aggressiveness by inducing cell migration and invasion through its interaction with the actin-binding protein EZR. Affects EZR-dependent signaling events, leading to increased activities of the MAPK and PI3K pathways in cancer cells. In Rattus norvegicus (Rat), this protein is Podocalyxin (Podxl).